We begin with the raw amino-acid sequence, 255 residues long: 5-oxoprolinase subunit A (255 aa).

The protein belongs to the LamB/PxpA family. As to quaternary structure, forms a complex composed of PxpA, PxpB and PxpC.

The enzyme catalyses 5-oxo-L-proline + ATP + 2 H2O = L-glutamate + ADP + phosphate + H(+). Functionally, catalyzes the cleavage of 5-oxoproline to form L-glutamate coupled to the hydrolysis of ATP to ADP and inorganic phosphate. This Campylobacter jejuni subsp. jejuni serotype O:2 (strain ATCC 700819 / NCTC 11168) protein is 5-oxoprolinase subunit A.